Here is a 154-residue protein sequence, read N- to C-terminus: Low molecular weight protein-tyrosine-phosphatase PtpA (154 aa).

The active-site Nucleophile is cysteine 8. Residue arginine 14 is part of the active site. Residue aspartate 120 is the Proton donor of the active site.

This sequence belongs to the low molecular weight phosphotyrosine protein phosphatase family.

The catalysed reaction is O-phospho-L-tyrosyl-[protein] + H2O = L-tyrosyl-[protein] + phosphate. In terms of biological role, dephosphorylates the phosphotyrosine-containing proteins. The chain is Low molecular weight protein-tyrosine-phosphatase PtpA (ptpA) from Staphylococcus haemolyticus (strain JCSC1435).